Reading from the N-terminus, the 545-residue chain is MAAKEVKFGRSAREKMLRGVDILADAVKVTLGPKGRNVVIDKSFGAPRITKDGVTVAKEIELEDKFENMGAQMVREVASKTNDIAGDGTTTATVLAQAIVREGAKAVAAGMNPMDLKRGIDLAVAEVVKDLLAKAKTINTSDEVAQVGTISANGEKQIGLDIAEAMQKVGNEGVITVEEAKTAETELEVVDGMQFDRGYLSPYFVTNPEKMVADLEDAYILLHEKKLSNLQAMLPVLEAVVQTGKPLLIIAEDVEGEALATLVVNKLRGGLKIAAVKAPGFGDRRKAMLEDIAILTGGTVISEDLGIKLESVTLDMLGRAKKVSITKENTTIVDGAGQKSDIEGRVAQIKAQIEETTSDYDREKLQERLAKLAGGVAVIRVGGATEVEVKEKKDRIDDALNATRAAVQEGIVPGGGVALLRSSVKITVKGENDDQDAGVNIVRRALQSPARQIVENAGDEASIVVGKILEKDTDDFGYNAQTGEYGDMIAMGIIDPVKVVRTALQDAASVASLLITTEAMIAELPKKDAPAMPGGMGGMGGMDMM.

ATP is bound by residues 30 to 33 (TLGP), K51, 87 to 91 (DGTTT), G415, and D495.

This sequence belongs to the chaperonin (HSP60) family. Forms a cylinder of 14 subunits composed of two heptameric rings stacked back-to-back. Interacts with the co-chaperonin GroES.

Its subcellular location is the cytoplasm. It carries out the reaction ATP + H2O + a folded polypeptide = ADP + phosphate + an unfolded polypeptide.. Its function is as follows. Together with its co-chaperonin GroES, plays an essential role in assisting protein folding. The GroEL-GroES system forms a nano-cage that allows encapsulation of the non-native substrate proteins and provides a physical environment optimized to promote and accelerate protein folding. This Sinorhizobium medicae (strain WSM419) (Ensifer medicae) protein is Chaperonin GroEL 5.